The primary structure comprises 195 residues: dCTP deaminase (195 aa).

Residues 105–110 (RSSLGR), aspartate 123, 131–133 (TLE), glutamine 152, tyrosine 166, lysine 173, and glutamine 177 contribute to the dCTP site. The active-site Proton donor/acceptor is the glutamate 133. Residues 159-195 (KTPADRPYGAERGSKYQGQSGPQASKIQGDREFGGDQ) are disordered. Residues 160–172 (TPADRPYGAERGS) show a composition bias toward basic and acidic residues. Positions 174–184 (YQGQSGPQASK) are enriched in polar residues. Residues 186 to 195 (QGDREFGGDQ) show a composition bias toward basic and acidic residues.

The protein belongs to the dCTP deaminase family. As to quaternary structure, homotrimer.

The catalysed reaction is dCTP + H2O + H(+) = dUTP + NH4(+). It participates in pyrimidine metabolism; dUMP biosynthesis; dUMP from dCTP (dUTP route): step 1/2. In terms of biological role, catalyzes the deamination of dCTP to dUTP. This chain is dCTP deaminase, found in Haloarcula marismortui (strain ATCC 43049 / DSM 3752 / JCM 8966 / VKM B-1809) (Halobacterium marismortui).